The following is an 83-amino-acid chain: Short neurotoxin D (83 aa).

Residues 1–21 (MKTLLLTLVVVTMVCLDLGYT) form the signal peptide. 4 cysteine pairs are disulfide-bonded: Cys-24–Cys-45, Cys-38–Cys-62, Cys-64–Cys-75, and Cys-76–Cys-81.

The protein belongs to the three-finger toxin family. Short-chain subfamily. Type I alpha-neurotoxin sub-subfamily. As to expression, expressed by the venom gland.

The protein localises to the secreted. Binds to muscle nicotinic acetylcholine receptor (nAChR) and inhibit acetylcholine from binding to the receptor, thereby impairing neuromuscular transmission. This Laticauda colubrina (Yellow-lipped sea krait) protein is Short neurotoxin D.